Consider the following 921-residue polypeptide: Inner nuclear membrane protein Man1 (921 aa).

The LEM domain maps to 7 to 51; that stretch reads AAAPQQLSDEELFSQLRRYGLSPGPVTESTRPVYLKKLKKLREEE. A Phosphoserine modification is found at S28. Disordered stretches follow at residues 47-97, 136-357, and 374-395; these read LREE…AYLR, SSDE…GGCG, and LAPL…PTGP. Low complexity-rich tracts occupy residues 53–62 and 72–85; these read QQQQQQQQQQ and TRNS…TAMG. Phosphoserine is present on residues S136, S137, and S140. Positions 217 to 237 are enriched in acidic residues; the sequence is AAEDADEELADGEDRDPEAEE. Residues S261, S263, and S287 each carry the phosphoserine modification. The span at 263–275 shows a compositional bias: acidic residues; that stretch reads SEEEEEEGEEDGD. Positions 308–317 are enriched in polar residues; the sequence is SGGSRQETSV. The span at 348–357 shows a compositional bias: gly residues; sequence PGGGGGGGCG. The residue at position 412 (S412) is a Phosphoserine. 2 helical membrane-spanning segments follow: residues 486–506 and 637–657; these read MFLL…YLGM and AFIT…LVCV. An interaction with SMAD1, SMAD2, SMAD3 and SMAD5 region spans residues 709–921; the sequence is VRDSLIQPQD…TGLANSQGSS (213 aa). Residues 717–736 mediate DNA binding; the sequence is QDRKKMKKVWDRAVDFLAAN. S787 is subject to Phosphoserine. T893 carries the post-translational modification Phosphothreonine. Phosphoserine is present on S921.

In terms of assembly, interacts with SMAD1, SMAD2, SMAD3 and SMAD5. Binds to both phosphorylated and unphosphorylated R-SMADS.

It is found in the nucleus inner membrane. In terms of biological role, can function as a specific repressor of TGF-beta, activin, and BMP signaling through its interaction with the R-SMAD proteins. Antagonizes TGF-beta-induced cell proliferation arrest. The protein is Inner nuclear membrane protein Man1 (Lemd3) of Mus musculus (Mouse).